The primary structure comprises 259 residues: UPF0246 protein NMB0895 (259 aa).

Belongs to the UPF0246 family.

The protein is UPF0246 protein NMB0895 of Neisseria meningitidis serogroup B (strain ATCC BAA-335 / MC58).